Reading from the N-terminus, the 888-residue chain is Prodigiosin synthesizing transferase PigC (888 aa).

This sequence belongs to the PigC family.

It participates in antibiotic biosynthesis; prodigiosin biosynthesis. In terms of biological role, involved in the biosynthesis of 2-methyl-3-n-amyl-pyrrole (MAP), one of the terminal products involved in the biosynthesis of the red antibiotic prodigiosin (Pig). Catalyzes the transfer of 2-methyl-3-n-amyl-pyrrole (MAP) to 4-methoxy-2,2'-bipyrrole-5-carbaldehyde (MBC) to yield prodigiosin. It is able to use substrates with a variety of monocyclic rings in place of the pyrrolic ring A of its natural substrate. This Serratia marcescens protein is Prodigiosin synthesizing transferase PigC.